Consider the following 92-residue polypeptide: Transcription factor PRE4 (92 aa).

Positions 5 to 60 (KSRSRQTGASMITDEQINDLVLQLHRLLPELANNRRSGKVSASRVLQETCSYIRNL) constitute a bHLH domain.

This sequence belongs to the bHLH protein family. In terms of assembly, interacts with HFR1 and IBH1. As to expression, expressed in roots, leaves, stems and flowers.

The protein localises to the nucleus. Functionally, atypical and probable non DNA-binding bHLH transcription factor that integrates multiple signaling pathways to regulate cell elongation and plant development. Regulates light responses by binding and inhibiting the activity of the bHLH transcription factor HFR1, a critical regulator of light signaling and shade avoidance. May have a regulatory role in various aspects of gibberellin-dependent growth and development. The protein is Transcription factor PRE4 (PRE4) of Arabidopsis thaliana (Mouse-ear cress).